The sequence spans 535 residues: Peptide chain release factor 3 (535 aa).

The region spanning 8–278 (ARRRTFAIIS…VDQAPAPGPR (271 aa)) is the tr-type G domain. GTP-binding positions include 17–24 (SHPDAGKT), 85–89 (DTPGH), and 139–142 (NKLD).

Belongs to the TRAFAC class translation factor GTPase superfamily. Classic translation factor GTPase family. PrfC subfamily.

The protein resides in the cytoplasm. Increases the formation of ribosomal termination complexes and stimulates activities of RF-1 and RF-2. It binds guanine nucleotides and has strong preference for UGA stop codons. It may interact directly with the ribosome. The stimulation of RF-1 and RF-2 is significantly reduced by GTP and GDP, but not by GMP. In Bordetella bronchiseptica (strain ATCC BAA-588 / NCTC 13252 / RB50) (Alcaligenes bronchisepticus), this protein is Peptide chain release factor 3.